Here is a 31-residue protein sequence, read N- to C-terminus: Sarcolipin (31 aa).

At 1-7 (MERSTRE) the chain is on the cytoplasmic side. The helical transmembrane segment at 8-26 (LCLNFTVVLITVILIWLLV) threads the bilayer. The Lumenal portion of the chain corresponds to 27–31 (RSYQY).

Belongs to the sarcolipin family. As to quaternary structure, homooligomer. Can also form heterooligomers with other sarcoplasmic/endoplasmic reticulum calcium ATPase (SERCA) regulators ARLN, ERLN, PLN and STRIT1/DWORF. Monomer. Interacts with calcium ATPase ATP2A1/SERCA1. Interacts as a monomer with ATP2A2/SERCA2; the interaction decreases ATP2A2 Ca(2+) affinity. Interacts with VMP1; VMP1 competes with PLN and SLN to prevent them from forming an inhibitory complex with ATP2A2. In terms of tissue distribution, skeletal muscle (at protein level).

It is found in the sarcoplasmic reticulum membrane. It localises to the endoplasmic reticulum membrane. Reversibly inhibits the activity of ATP2A1/SERCA1 and ATP2A2/SERCA2 in sarcoplasmic reticulum by decreasing the apparent affinity of the ATPase for Ca(2+). Also inhibits the activity of ATP2A3/SERCA3. Modulates calcium re-uptake during muscle relaxation and plays an important role in calcium homeostasis in muscle. Required for muscle-based, non-shivering thermogenesis. This is Sarcolipin (SLN) from Oryctolagus cuniculus (Rabbit).